A 124-amino-acid polypeptide reads, in one-letter code: Small ribosomal subunit protein uS12 (124 aa).

Asp-89 carries the post-translational modification 3-methylthioaspartic acid.

This sequence belongs to the universal ribosomal protein uS12 family. In terms of assembly, part of the 30S ribosomal subunit. Contacts proteins S8 and S17. May interact with IF1 in the 30S initiation complex.

Its function is as follows. With S4 and S5 plays an important role in translational accuracy. In terms of biological role, interacts with and stabilizes bases of the 16S rRNA that are involved in tRNA selection in the A site and with the mRNA backbone. Located at the interface of the 30S and 50S subunits, it traverses the body of the 30S subunit contacting proteins on the other side and probably holding the rRNA structure together. The combined cluster of proteins S8, S12 and S17 appears to hold together the shoulder and platform of the 30S subunit. The sequence is that of Small ribosomal subunit protein uS12 from Shewanella piezotolerans (strain WP3 / JCM 13877).